Here is a 179-residue protein sequence, read N- to C-terminus: Large ribosomal subunit protein uL5 (179 aa).

It belongs to the universal ribosomal protein uL5 family. Part of the 50S ribosomal subunit; part of the 5S rRNA/L5/L18/L25 subcomplex. Contacts the 5S rRNA and the P site tRNA. Forms a bridge to the 30S subunit in the 70S ribosome.

In terms of biological role, this is one of the proteins that bind and probably mediate the attachment of the 5S RNA into the large ribosomal subunit, where it forms part of the central protuberance. In the 70S ribosome it contacts protein S13 of the 30S subunit (bridge B1b), connecting the 2 subunits; this bridge is implicated in subunit movement. Contacts the P site tRNA; the 5S rRNA and some of its associated proteins might help stabilize positioning of ribosome-bound tRNAs. The chain is Large ribosomal subunit protein uL5 from Albidiferax ferrireducens (strain ATCC BAA-621 / DSM 15236 / T118) (Rhodoferax ferrireducens).